The chain runs to 480 residues: 2-phosphoxylose phosphatase 1 (480 aa).

Residues 1 to 6 lie on the Cytoplasmic side of the membrane; that stretch reads MLFRNR. Residues 7 to 27 form a helical; Signal-anchor for type II membrane protein membrane-spanning segment; sequence FLLLLALAALLAFVSLSLQFF. Residues 28–480 lie on the Lumenal side of the membrane; that stretch reads HLIPVSTPKN…YYDACHREGF (453 aa). Residue His97 is the Nucleophile of the active site. N-linked (GlcNAc...) asparagine glycans are attached at residues Asn305 and Asn354. Asp379 serves as the catalytic Proton donor.

The protein belongs to the histidine acid phosphatase family. In terms of assembly, interacts with B3GAT3; the interaction increases the 2-phosphoxylose phosphatase activity of PXYLP1 during completion of linkage region formation in a B3GAT3-mediated manner. In terms of tissue distribution, widely expressed. Strongly expressed in spleen, fetal liver, moderately in placenta, pancreas, kidney, thymus and colon.

Its subcellular location is the golgi apparatus membrane. The catalysed reaction is 3-O-[beta-D-GlcA-(1-&gt;3)-beta-D-Gal-(1-&gt;3)-beta-D-Gal-(1-&gt;4)-beta-D-2-O-P-Xyl]-L-seryl-[protein] + H2O = 3-O-(beta-D-GlcA-(1-&gt;3)-beta-D-Gal-(1-&gt;3)-beta-D-Gal-(1-&gt;4)-beta-D-Xyl)-L-seryl-[protein] + phosphate. Its function is as follows. Responsible for the 2-O-dephosphorylation of xylose in the glycosaminoglycan-protein linkage region of proteoglycans thereby regulating the amount of mature glycosaminoglycan (GAG) chains. Sulfated glycosaminoglycans (GAGs), including heparan sulfate and chondroitin sulfate, are synthesized on the so-called common GAG-protein linkage region (GlcUAbeta1-3Galbeta1-3Galbeta1-4Xylbeta1-O-Ser) of core proteins, which is formed by the stepwise addition of monosaccharide residues by the respective specific glycosyltransferases. Xylose 2-O-dephosphorylation during completion of linkage region formation is a prerequisite for the initiation and efficient elongation of the repeating disaccharide region of GAG chains. The polypeptide is 2-phosphoxylose phosphatase 1 (Homo sapiens (Human)).